The sequence spans 534 residues: Glutamyl-tRNA(Gln) amidotransferase subunit B, mitochondrial (534 aa).

A mitochondrion-targeting transit peptide spans 1–28; sequence MTVLCRLRHCHLSTPTLCRRFHDARVYK.

This sequence belongs to the GatB/GatE family. GatB subfamily. Subunit of the heterotrimeric GatCAB amidotransferase (AdT) complex, composed of A, B and C subunits.

It is found in the mitochondrion. It catalyses the reaction L-glutamyl-tRNA(Gln) + L-glutamine + ATP + H2O = L-glutaminyl-tRNA(Gln) + L-glutamate + ADP + phosphate + H(+). Its function is as follows. Allows the formation of correctly charged Gln-tRNA(Gln) through the transamidation of misacylated Glu-tRNA(Gln) in the mitochondria. The reaction takes place in the presence of glutamine and ATP through an activated gamma-phospho-Glu-tRNA(Gln). This chain is Glutamyl-tRNA(Gln) amidotransferase subunit B, mitochondrial, found in Laccaria bicolor (strain S238N-H82 / ATCC MYA-4686) (Bicoloured deceiver).